A 124-amino-acid chain; its full sequence is NADPH-dependent 7-cyano-7-deazaguanine reductase (124 aa).

Cys-40 (thioimide intermediate) is an active-site residue. Asp-47 serves as the catalytic Proton donor. Substrate contacts are provided by residues 62-64 and 81-82; these read VEL and HE.

This sequence belongs to the GTP cyclohydrolase I family. QueF type 1 subfamily.

It is found in the cytoplasm. The enzyme catalyses 7-aminomethyl-7-carbaguanine + 2 NADP(+) = 7-cyano-7-deazaguanine + 2 NADPH + 3 H(+). It functions in the pathway tRNA modification; tRNA-queuosine biosynthesis. Its function is as follows. Catalyzes the NADPH-dependent reduction of 7-cyano-7-deazaguanine (preQ0) to 7-aminomethyl-7-deazaguanine (preQ1). The chain is NADPH-dependent 7-cyano-7-deazaguanine reductase from Wolinella succinogenes (strain ATCC 29543 / DSM 1740 / CCUG 13145 / JCM 31913 / LMG 7466 / NCTC 11488 / FDC 602W) (Vibrio succinogenes).